A 461-amino-acid chain; its full sequence is Asparagine--tRNA ligase (461 aa).

This sequence belongs to the class-II aminoacyl-tRNA synthetase family. As to quaternary structure, homodimer.

Its subcellular location is the cytoplasm. The enzyme catalyses tRNA(Asn) + L-asparagine + ATP = L-asparaginyl-tRNA(Asn) + AMP + diphosphate + H(+). The chain is Asparagine--tRNA ligase from Nitratidesulfovibrio vulgaris (strain DP4) (Desulfovibrio vulgaris).